A 330-amino-acid polypeptide reads, in one-letter code: tRNA N6-adenosine threonylcarbamoyltransferase (330 aa).

Residues histidine 110 and histidine 114 each coordinate Fe cation. Residues 133 to 137 (LVSGG), aspartate 166, glycine 179, and asparagine 268 each bind substrate. Aspartate 296 serves as a coordination point for Fe cation.

Belongs to the KAE1 / TsaD family. Requires Fe(2+) as cofactor.

It localises to the cytoplasm. The catalysed reaction is L-threonylcarbamoyladenylate + adenosine(37) in tRNA = N(6)-L-threonylcarbamoyladenosine(37) in tRNA + AMP + H(+). Its function is as follows. Required for the formation of a threonylcarbamoyl group on adenosine at position 37 (t(6)A37) in tRNAs that read codons beginning with adenine. Is involved in the transfer of the threonylcarbamoyl moiety of threonylcarbamoyl-AMP (TC-AMP) to the N6 group of A37, together with TsaE and TsaB. TsaD likely plays a direct catalytic role in this reaction. This is tRNA N6-adenosine threonylcarbamoyltransferase from Kosmotoga olearia (strain ATCC BAA-1733 / DSM 21960 / TBF 19.5.1).